A 275-amino-acid chain; its full sequence is MIQFTKMHGLGNDFMVVDGVTQNVFFSPEQIRRLADRNFGIGFDQLLLVEPPYDPDLDFHYRIFNADGTEVEQCGNGARCFARFVRNKGLTNKSKIRVSTSSGKMTLRLERDGTVTVNMGVPILEPSQIPFKAKKPEKTYLLQTPMQTFLCGAASMGNPHCVLDVEDVASASVAEIGAMLTKHERFPRGVNVGFMQVVDSGHIKLRVYERGAAETLACGTGACAAVVVGQVQGKLGQQVRVDLPGGTLTINWEGEGKPLWMTGPAQHVYDGQIQL.

Residues Asn12, Gln45, and Asn65 each coordinate substrate. The active-site Proton donor is the Cys74. Residues 75–76, Asn158, Asn191, and 209–210 each bind substrate; these read GN and ER. Cys218 (proton acceptor) is an active-site residue. 219 to 220 is a binding site for substrate; the sequence is GT.

It belongs to the diaminopimelate epimerase family. Homodimer.

The protein resides in the cytoplasm. The enzyme catalyses (2S,6S)-2,6-diaminopimelate = meso-2,6-diaminopimelate. It participates in amino-acid biosynthesis; L-lysine biosynthesis via DAP pathway; DL-2,6-diaminopimelate from LL-2,6-diaminopimelate: step 1/1. Catalyzes the stereoinversion of LL-2,6-diaminopimelate (L,L-DAP) to meso-diaminopimelate (meso-DAP), a precursor of L-lysine and an essential component of the bacterial peptidoglycan. This chain is Diaminopimelate epimerase, found in Shewanella baltica (strain OS223).